An 861-amino-acid polypeptide reads, in one-letter code: Major vault protein (861 aa).

N-acetylalanine is present on alanine 2. MVP repeat units lie at residues 2-56 (ATEE…VPPR), 57-111 (HYCI…DITP), 112-164 (LQVV…EIIQ), 165-217 (ATVI…DLVD), 218-272 (AVIL…GVVP), 273-323 (ITTL…IQDV), 324-379 (YVLS…ERQA), 380-457 (IPLD…KTRV), and 458-520 (VSYR…LLGP). Serine 421 is modified (phosphoserine). A Glycyl lysine isopeptide (Lys-Gly) (interchain with G-Cter in SUMO2) cross-link involves residue lysine 444. Lysine 704 is covalently cross-linked (Glycyl lysine isopeptide (Lys-Gly) (interchain with G-Cter in SUMO2)).

In terms of assembly, the vault ribonucleoprotein particle is a huge (400 A x 670 A) cage structure of 12.9 MDa. It consists of a dimer of half-vaults, with each half-vault comprising 39 identical major vault protein (MVP) chains, PARP4 and one or more vault RNAs (vRNAs). Interacts with PTEN and activated MAPK1. The phosphorylated protein interacts with the SH2 domains of PTPN11 and SRC. Interacts with APEX1. May interact with ZNF540. Interacts with TEP1. Phosphorylated on Tyr residues after EGF stimulation. Post-translationally, dephosphorylated by PTPN11.

Its subcellular location is the cytoplasm. The protein resides in the nucleus. In terms of biological role, required for normal vault structure. Vaults are multi-subunit structures that may act as scaffolds for proteins involved in signal transduction. Vaults may also play a role in nucleo-cytoplasmic transport. Down-regulates IFNG-mediated STAT1 signaling and subsequent activation of JAK. Down-regulates SRC activity and signaling through MAP kinases. The polypeptide is Major vault protein (Mvp) (Mus musculus (Mouse)).